Consider the following 646-residue polypeptide: Phosphomethylpyrimidine synthase (646 aa).

Polar residues predominate over residues 1 to 13; sequence MNIRSNPDTTRPA. A disordered region spans residues 1–30; it reads MNIRSNPDTTRPAVTTGALPSSRKMFSAPD. Substrate contacts are provided by residues asparagine 221, methionine 250, tyrosine 279, histidine 315, 335 to 337, 376 to 379, and glutamate 415; these read SRG and DGLR. Histidine 419 contributes to the Zn(2+) binding site. Tyrosine 442 contributes to the substrate binding site. Residue histidine 483 participates in Zn(2+) binding. The [4Fe-4S] cluster site is built by cysteine 563, cysteine 566, and cysteine 571.

It belongs to the ThiC family. Homodimer. Requires [4Fe-4S] cluster as cofactor.

It carries out the reaction 5-amino-1-(5-phospho-beta-D-ribosyl)imidazole + S-adenosyl-L-methionine = 4-amino-2-methyl-5-(phosphooxymethyl)pyrimidine + CO + 5'-deoxyadenosine + formate + L-methionine + 3 H(+). It participates in cofactor biosynthesis; thiamine diphosphate biosynthesis. In terms of biological role, catalyzes the synthesis of the hydroxymethylpyrimidine phosphate (HMP-P) moiety of thiamine from aminoimidazole ribotide (AIR) in a radical S-adenosyl-L-methionine (SAM)-dependent reaction. This is Phosphomethylpyrimidine synthase from Nitrobacter winogradskyi (strain ATCC 25391 / DSM 10237 / CIP 104748 / NCIMB 11846 / Nb-255).